Here is a 331-residue protein sequence, read N- to C-terminus: Flagellar P-ring protein (331 aa).

The first 22 residues, 1 to 22 (MRKVTIFIIIIVALTGFGSVRI), serve as a signal peptide directing secretion.

The protein belongs to the FlgI family. As to quaternary structure, the basal body constitutes a major portion of the flagellar organelle and consists of four rings (L,P,S, and M) mounted on a central rod.

Its subcellular location is the periplasm. It localises to the bacterial flagellum basal body. Assembles around the rod to form the L-ring and probably protects the motor/basal body from shearing forces during rotation. The sequence is that of Flagellar P-ring protein from Pseudothermotoga lettingae (strain ATCC BAA-301 / DSM 14385 / NBRC 107922 / TMO) (Thermotoga lettingae).